A 446-amino-acid chain; its full sequence is D(1A) dopamine receptor (446 aa).

Over 1 to 22 (MPLNDTTMDRRGLVVERDFSFR) the chain is Extracellular. N-linked (GlcNAc...) asparagine glycosylation occurs at Asn4. Residues 23–48 (ILTACFLSLLILSTLLGNTLVCAAVI) form a helical membrane-spanning segment. The Cytoplasmic portion of the chain corresponds to 49–59 (RFRHLRSKVTN). The chain crosses the membrane as a helical span at residues 60–86 (FFVISLAVSDLLVAVLVMPWKAVAEIA). The Extracellular portion of the chain corresponds to 87-95 (GFWPFGSFC). Residues Cys95 and Cys185 are joined by a disulfide bond. A helical transmembrane segment spans residues 96-118 (NIWVAFDIMCSTASILNLCVISV). Residues 119 to 137 (DRYWAISSPFRYERKMTPK) are Cytoplasmic-facing. The helical transmembrane segment at 138–162 (AAFILISVAWTLSVLISFIPVQLNW) threads the bilayer. Residues 163–191 (HKARPLSSPDGNVSSQDETMDNCDSSLSR) are Extracellular-facing. The chain crosses the membrane as a helical span at residues 192 to 217 (TYAISSSLISFYIPVAIMIVTYTRIY). Residues 218 to 271 (RIAQKQIRRISALERAAVHAKNCQNTTGNGANVECSQPESSFKMSFKRETKVLK) lie on the Cytoplasmic side of the membrane. The helical transmembrane segment at 272–298 (TLSVIMGVFVCCWLPFFILNCMVPFCE) threads the bilayer. The Extracellular segment spans residues 299-315 (SDLPSGETKPFCIDSIT). Residues 316–340 (FDVFVWFGWANSSLNPIIYAFNADF) traverse the membrane as a helical segment. Over 341 to 446 (RKAFSTLLGC…PITQNGQHKT (106 aa)) the chain is Cytoplasmic. 2 S-palmitoyl cysteine lipidation sites follow: Cys350 and Cys354.

This sequence belongs to the G-protein coupled receptor 1 family. As to quaternary structure, interacts with DNAJC14 via its C-terminus.

The protein localises to the cell membrane. Its subcellular location is the endoplasmic reticulum membrane. The protein resides in the cell projection. It is found in the cilium membrane. It localises to the dendrite. The protein localises to the dendritic spine. This is one of the five types (D1 to D5) of receptors for dopamine. The activity of this receptor is mediated by G proteins which activate adenylyl cyclase. The chain is D(1A) dopamine receptor (DRD1) from Didelphis virginiana (North American opossum).